Reading from the N-terminus, the 479-residue chain is FAD-dependent monooxygenase sdcF (479 aa).

Residues 40–213 (AQLPPSCFVL…TLFDMEAFST (174 aa)) form the FAD-binding PCMH-type domain. His79 carries the post-translational modification Pros-8alpha-FAD histidine.

Belongs to the oxygen-dependent FAD-linked oxidoreductase family. FAD is required as a cofactor.

It functions in the pathway secondary metabolite biosynthesis. Its function is as follows. FAD-dependent monooxygenase; part of the gene cluster that mediates the biosynthesis of the polyenes aspernidgulenes. The carbon backbone of aspernidgulenes is synthesized by the HR-PKS sdgA, which accepts acetyl-CoA as the starter unit and performs malonyl-CoA extensions as well as regioselective methylation and reduction. The resulting nonaketide offloads the HR-PKS by intramolecular lactonization to yield the 5,6-dihydro-alpha-pyrone-containing hexaenoic acids preaspernidgulene A1 and A2. The FAD-dependent monooxygenase sdgC then installs the first epoxide on the penultimate double bond. Subsequently, the FAD-dependent monooxygenase sdgF presumably generates a ketone intermediate through Meinwald rearrangement involving a hydride shift. Next, sdgC introduces another epoxide on the last olefin of the ketone intermediate after E/Z isomerization. The epoxide hydrolase sdgD then catalyzes stereospecific cyclization of the 5,6-dihydro-alpha-pyrone and opening of the epoxide ring to form an oxygenated trimethylcyclopentanone and an oxabicyclo[2.2.1]heptane unit. Finally, the bicyclic unit undergoes hydrolytic cleavage, either spontaneously or catalyzed by sdgD, to assemble the dimethyl-gamma-lactone moiety in aspernidgulene A1. The polypeptide is FAD-dependent monooxygenase sdcF (Emericella nidulans (strain FGSC A4 / ATCC 38163 / CBS 112.46 / NRRL 194 / M139) (Aspergillus nidulans)).